The sequence spans 613 residues: Transcription factor Sp2 (613 aa).

The disordered stretch occupies residues 1-32 (MSDPQTSMAATAAVSPSDYLQPAASTTQDSQP). Polar residues predominate over residues 23-32 (AASTTQDSQP). S78 is modified (phosphoserine). Polar residues predominate over residues 225-235 (TGAPTQLLTES). Residues 225-258 (TGAPTQLLTESPPTPLSKTNKKARKKSLPASQPP) form a disordered region. The 9aaTAD; inactive motif lies at 361 to 369 (GEVQTVLVQ). The segment covering 372–389 (PPATAAATSNTTCSSPAS) has biased composition (low complexity). The interval 372–404 (PPATAAATSNTTCSSPASRAPHLSGTSKKHSAA) is disordered. C2H2-type zinc fingers lie at residues 525 to 549 (HVCH…VRLH), 555 to 579 (FVCN…ARTH), and 585 to 607 (FECA…YKTH).

This sequence belongs to the Sp1 C2H2-type zinc-finger protein family.

The protein localises to the nucleus. Functionally, binds to GC box promoters elements and selectively activates mRNA synthesis from genes that contain functional recognition sites. In Homo sapiens (Human), this protein is Transcription factor Sp2 (SP2).